Here is a 378-residue protein sequence, read N- to C-terminus: Heme chaperone HemW (378 aa).

Residues 1 to 237 (MVKLPPLSLY…LTAAGYQQYE (237 aa)) form the Radical SAM core domain. Y10 is a binding site for S-adenosyl-L-methionine. 3 residues coordinate [4Fe-4S] cluster: C16, C20, and C23. S-adenosyl-L-methionine-binding positions include G66, 67-68 (GT), E99, Q126, R138, and D163.

This sequence belongs to the anaerobic coproporphyrinogen-III oxidase family. HemW subfamily. Binding of the [4Fe-4S] cofactor promotes dimerization. Requires [4Fe-4S] cluster as cofactor.

The protein resides in the cytoplasm. Functionally, probably acts as a heme chaperone, transferring heme to the NarI subunit of the respiratory enzyme nitrate reductase; transfer may be stimulated by NADH. Binds one molecule of heme per monomer, possibly covalently. Heme binding is not affected by either [4Fe-4S] or S-adenosyl-L-methionine (SAM)-binding. Does not have coproporphyrinogen III dehydrogenase activity in vitro. Binds 1 [4Fe-4S] cluster. The cluster is coordinated with 3 cysteines and an exchangeable S-adenosyl-L-methionine. In Escherichia coli (strain K12), this protein is Heme chaperone HemW.